A 720-amino-acid polypeptide reads, in one-letter code: MPPPSDIVKVAIEWPGANAQLLEIDQKRPLASIIKEVCDGWSLPNPEYYTLRYADGPQLYITEQTRSDIKNGTILQLAISPSRAARQLMERTQSSSMETRLDAMKELAKLSADVTFATEFINMDGIVVLTRLVESGTKLLSHYSEMLAFTLTAFLELMDHGIVSWDMVSITFIKQIAGYVSQPMVDVSILQRSLAILESMVLNSQSLYQKIAEEITVGQLISHLQVSNQEIQTYAIALINALFLKAPEDKRQDMANAFAQKHLRSIILNHVIRGNRPIKTEMAHQLYVLQVLTFNLLEERMMTKMDPNDQAQRDIIFELRRIAFDADSDPSNAPGSGTEKRKAMYTKDYKMLGFTNHINPAMDFTQTPPGMLALDNMLYLAKVHQDTYIRIVLENSSREDKHECPFGRSAIELTKMLCEILQVGELPNEGRNDYHPMFFTHDRAFEELFGICIQLLNKTWKEMRATAEDFNKVMQVVREQITRALPSKPNSLDQFKSKLRSLSYSEILRLRQSERMSQDDFQSPPIVELREKIQPEILELIKQQRLNRLCEGSSFRKIGNRRRQERFWYCRLALNHKVLHYGDLDDNPQGEVTFESLQEKIPVADIKAIVTGKDCPHMKEKSALKQNKEVLELAFSILYDPDETLNFIAPNKYEYCIWIDGLSALLGKDMSSELTKSDRDTLLSMEMKLRLLDLENIQIPEAPPPVPKEPSSYDFVYHYG.

At Y48 the chain carries Phosphotyrosine. The region spanning 310–484 (QAQRDIIFEL…QVVREQITRA (175 aa)) is the ELMO domain. Phosphoserine is present on S503. The region spanning 553-674 (SSFRKIGNRR…LLGKDMSSEL (122 aa)) is the PH domain. The short motif at 700-707 (PEAPPPVP) is the SH3-binding element. The residue at position 717 (Y717) is a Phosphotyrosine.

In terms of assembly, interacts directly with the SH3-domain of DOCK1 via its SH3-binding site. Probably forms a heterotrimeric complex with DOCK1 and RAC1. Interacts with ARHGEF16, DOCK4 and EPHA2; mediates activation of RAC1 by EPHA2. Interacts with ADGRB3. Interacts with AUTS2; the interaction is direct.

The protein resides in the cytoplasm. The protein localises to the cytosol. It localises to the membrane. Functionally, involved in cytoskeletal rearrangements required for phagocytosis of apoptotic cells and cell motility. Acts in association with DOCK1 and CRK. Was initially proposed to be required in complex with DOCK1 to activate Rac Rho small GTPases. May enhance the guanine nucleotide exchange factor (GEF) activity of DOCK1. This chain is Engulfment and cell motility protein 2 (ELMO2), found in Bos taurus (Bovine).